We begin with the raw amino-acid sequence, 76 residues long: Large ribosomal subunit protein bL31 (76 aa).

This sequence belongs to the bacterial ribosomal protein bL31 family. Type A subfamily. As to quaternary structure, part of the 50S ribosomal subunit.

Binds the 23S rRNA. This chain is Large ribosomal subunit protein bL31 (rpmE), found in Pelagibacter ubique (strain HTCC1062).